The following is a 299-amino-acid chain: Ig alpha chain C region (299 aa).

2 Ig-like domains span residues Pro71–Ser167 and Pro174–Asp276.

Ig alpha is the major immunoglobulin class in body secretions. It may serve both to defend against local infection and to prevent access of foreign antigens to the general immunologic system. This Oryctolagus cuniculus (Rabbit) protein is Ig alpha chain C region.